We begin with the raw amino-acid sequence, 341 residues long: Methionine import ATP-binding protein MetN 3 (341 aa).

The 240-residue stretch at 2-241 (ILLENVKKIY…PQQDITKRFV (240 aa)) folds into the ABC transporter domain. 38 to 45 (GYSGAGKS) serves as a coordination point for ATP.

The protein belongs to the ABC transporter superfamily. Methionine importer (TC 3.A.1.24) family. As to quaternary structure, the complex is composed of two ATP-binding proteins (MetN), two transmembrane proteins (MetI) and a solute-binding protein (MetQ).

The protein resides in the cell membrane. The catalysed reaction is L-methionine(out) + ATP + H2O = L-methionine(in) + ADP + phosphate + H(+). It carries out the reaction D-methionine(out) + ATP + H2O = D-methionine(in) + ADP + phosphate + H(+). Functionally, part of the ABC transporter complex MetNIQ involved in methionine import. Responsible for energy coupling to the transport system. The sequence is that of Methionine import ATP-binding protein MetN 3 from Bacillus cereus (strain ZK / E33L).